Reading from the N-terminus, the 353-residue chain is Photosystem II D2 protein (353 aa).

An N-acetylthreonine modification is found at T2. At T2 the chain carries Phosphothreonine. Residues 41–61 (CAYFALGGWFTGTTFVTSWYT) traverse the membrane as a helical segment. H118 provides a ligand contact to chlorophyll a. The chain crosses the membrane as a helical span at residues 125 to 141 (GFMLRQFELARSVQLRP). 2 residues coordinate pheophytin a: Q130 and N143. Residues 153-166 (VFVSVFLIYPLGQS) traverse the membrane as a helical segment. H198 provides a ligand contact to chlorophyll a. Residues 208-228 (AALLCAIHGATVENTLFEDGD) traverse the membrane as a helical segment. Residues H215 and F262 each contribute to the a plastoquinone site. H215 lines the Fe cation pocket. Residue H269 participates in Fe cation binding. A helical membrane pass occupies residues 279-295 (GLWMSAIGVVGLALNLR).

It belongs to the reaction center PufL/M/PsbA/D family. In terms of assembly, PSII is composed of 1 copy each of membrane proteins PsbA, PsbB, PsbC, PsbD, PsbE, PsbF, PsbH, PsbI, PsbJ, PsbK, PsbL, PsbM, PsbT, PsbX, PsbY, PsbZ, Psb30/Ycf12, at least 3 peripheral proteins of the oxygen-evolving complex and a large number of cofactors. It forms dimeric complexes. The cofactor is The D1/D2 heterodimer binds P680, chlorophylls that are the primary electron donor of PSII, and subsequent electron acceptors. It shares a non-heme iron and each subunit binds pheophytin, quinone, additional chlorophylls, carotenoids and lipids. There is also a Cl(-1) ion associated with D1 and D2, which is required for oxygen evolution. The PSII complex binds additional chlorophylls, carotenoids and specific lipids..

Its subcellular location is the plastid. It is found in the chloroplast thylakoid membrane. The catalysed reaction is 2 a plastoquinone + 4 hnu + 2 H2O = 2 a plastoquinol + O2. Its function is as follows. Photosystem II (PSII) is a light-driven water:plastoquinone oxidoreductase that uses light energy to abstract electrons from H(2)O, generating O(2) and a proton gradient subsequently used for ATP formation. It consists of a core antenna complex that captures photons, and an electron transfer chain that converts photonic excitation into a charge separation. The D1/D2 (PsbA/PsbD) reaction center heterodimer binds P680, the primary electron donor of PSII as well as several subsequent electron acceptors. D2 is needed for assembly of a stable PSII complex. This is Photosystem II D2 protein from Cryptomeria japonica (Japanese cedar).